The following is a 61-amino-acid chain: Rubredoxin 3 (61 aa).

Residues 1–53 (MSSYRCPVCEYVYDESKGAPREGFPAGTPWDAVPDDWCCPDCGVREKLDFEPM) enclose the Rubredoxin-like domain. Fe cation contacts are provided by Cys-6, Cys-9, Cys-39, and Cys-42.

It belongs to the rubredoxin family. It depends on Fe(3+) as a cofactor.

Functionally, involved in the hydrocarbon hydroxylating system, which transfers electrons from NADH to rubredoxin reductase and then through rubredoxin to alkane 1 monooxygenase. This Rhodococcus erythropolis (Arthrobacter picolinophilus) protein is Rubredoxin 3 (rubA3).